Here is a 473-residue protein sequence, read N- to C-terminus: Bifunctional protein HldE (473 aa).

Residues Met-1–Glu-318 are ribokinase. Asn-194 to Glu-197 lines the ATP pocket. Asp-263 is an active-site residue. The segment at Phe-343–His-473 is cytidylyltransferase.

It in the N-terminal section; belongs to the carbohydrate kinase PfkB family. This sequence in the C-terminal section; belongs to the cytidylyltransferase family. As to quaternary structure, homodimer.

It carries out the reaction D-glycero-beta-D-manno-heptose 7-phosphate + ATP = D-glycero-beta-D-manno-heptose 1,7-bisphosphate + ADP + H(+). It catalyses the reaction D-glycero-beta-D-manno-heptose 1-phosphate + ATP + H(+) = ADP-D-glycero-beta-D-manno-heptose + diphosphate. The protein operates within nucleotide-sugar biosynthesis; ADP-L-glycero-beta-D-manno-heptose biosynthesis; ADP-L-glycero-beta-D-manno-heptose from D-glycero-beta-D-manno-heptose 7-phosphate: step 1/4. It participates in nucleotide-sugar biosynthesis; ADP-L-glycero-beta-D-manno-heptose biosynthesis; ADP-L-glycero-beta-D-manno-heptose from D-glycero-beta-D-manno-heptose 7-phosphate: step 3/4. Functionally, catalyzes the phosphorylation of D-glycero-D-manno-heptose 7-phosphate at the C-1 position to selectively form D-glycero-beta-D-manno-heptose-1,7-bisphosphate. In terms of biological role, catalyzes the ADP transfer from ATP to D-glycero-beta-D-manno-heptose 1-phosphate, yielding ADP-D-glycero-beta-D-manno-heptose. The sequence is that of Bifunctional protein HldE from Pseudomonas entomophila (strain L48).